We begin with the raw amino-acid sequence, 222 residues long: uncharacterized protein (222 aa).

Residues asparagine 4, asparagine 75, asparagine 84, asparagine 104, asparagine 170, and asparagine 175 are each glycosylated (N-linked (GlcNAc...) asparagine; by host). The chain crosses the membrane as a helical span at residues 200-220 (LIIIIGIVIILLLIIVMIKTV).

It localises to the membrane. This is an uncharacterized protein from Acanthamoeba polyphaga (Amoeba).